Here is a 199-residue protein sequence, read N- to C-terminus: Nucleoside triphosphate pyrophosphatase (199 aa).

Residue aspartate 76 is the Proton acceptor of the active site.

The protein belongs to the Maf family. A divalent metal cation serves as cofactor.

The protein localises to the cytoplasm. It catalyses the reaction a ribonucleoside 5'-triphosphate + H2O = a ribonucleoside 5'-phosphate + diphosphate + H(+). The enzyme catalyses a 2'-deoxyribonucleoside 5'-triphosphate + H2O = a 2'-deoxyribonucleoside 5'-phosphate + diphosphate + H(+). Functionally, nucleoside triphosphate pyrophosphatase. May have a dual role in cell division arrest and in preventing the incorporation of modified nucleotides into cellular nucleic acids. This Caulobacter vibrioides (strain ATCC 19089 / CIP 103742 / CB 15) (Caulobacter crescentus) protein is Nucleoside triphosphate pyrophosphatase.